We begin with the raw amino-acid sequence, 462 residues long: Glycine--tRNA ligase (462 aa).

2 residues coordinate substrate: Arg-98 and Glu-174. ATP contacts are provided by residues 206 to 208, 216 to 221, 290 to 291, and 334 to 337; these read RNE, FRTREF, EL, and GADR. 221–225 is a binding site for substrate; the sequence is FEQME. 330-334 is a binding site for substrate; the sequence is EPSLG.

Belongs to the class-II aminoacyl-tRNA synthetase family. As to quaternary structure, homodimer.

Its subcellular location is the cytoplasm. It carries out the reaction tRNA(Gly) + glycine + ATP = glycyl-tRNA(Gly) + AMP + diphosphate. Its function is as follows. Catalyzes the attachment of glycine to tRNA(Gly). The chain is Glycine--tRNA ligase from Lachnospira eligens (strain ATCC 27750 / DSM 3376 / VPI C15-48 / C15-B4) (Eubacterium eligens).